The sequence spans 132 residues: D-ribose pyranase (132 aa).

The Proton donor role is filled by H20. Residues D28, H98, and 120 to 122 (YAN) contribute to the substrate site.

This sequence belongs to the RbsD / FucU family. RbsD subfamily. In terms of assembly, homodecamer.

It localises to the cytoplasm. The catalysed reaction is beta-D-ribopyranose = beta-D-ribofuranose. It participates in carbohydrate metabolism; D-ribose degradation; D-ribose 5-phosphate from beta-D-ribopyranose: step 1/2. Functionally, catalyzes the interconversion of beta-pyran and beta-furan forms of D-ribose. This is D-ribose pyranase from Geobacillus thermodenitrificans (strain NG80-2).